A 181-amino-acid polypeptide reads, in one-letter code: Adenylate kinase (181 aa).

10–15 provides a ligand contact to ATP; it reads GAGKGT. An NMP region spans residues 30–59; sequence STGELFRKNIQDGTKLGVEAKRYLDAGDLV. AMP is bound by residues threonine 31, arginine 36, 57-59, 85-88, and glutamine 92; these read DLV and GYPR. The interval 126–132 is LID; that stretch reads GRGRADD. Arginine 127 contacts ATP. Arginine 129 and arginine 140 together coordinate AMP. Glycine 166 contributes to the ATP binding site.

Belongs to the adenylate kinase family. As to quaternary structure, monomer.

The protein resides in the cytoplasm. It carries out the reaction AMP + ATP = 2 ADP. Its pathway is purine metabolism; AMP biosynthesis via salvage pathway; AMP from ADP: step 1/1. In terms of biological role, catalyzes the reversible transfer of the terminal phosphate group between ATP and AMP. Plays an important role in cellular energy homeostasis and in adenine nucleotide metabolism. The polypeptide is Adenylate kinase (Mycobacterium ulcerans (strain Agy99)).